A 340-amino-acid polypeptide reads, in one-letter code: Protein-lysine N-methyltransferase EEF2KMT (340 aa).

Residue M1 is modified to N-acetylmethionine. S-adenosyl-L-methionine-binding positions include W139, 165 to 167 (GSG), W238, and A257.

The protein belongs to the class I-like SAM-binding methyltransferase superfamily. EEF2KMT family. As to quaternary structure, interacts with FAM86B2 and FAM86C1P.

It localises to the cytoplasm. The catalysed reaction is L-lysyl-[protein] + 3 S-adenosyl-L-methionine = N(6),N(6),N(6)-trimethyl-L-lysyl-[protein] + 3 S-adenosyl-L-homocysteine + 3 H(+). Functionally, catalyzes the trimethylation of eukaryotic elongation factor 2 (EEF2) on 'Lys-525'. This chain is Protein-lysine N-methyltransferase EEF2KMT (EEF2KMT), found in Bos taurus (Bovine).